Consider the following 344-residue polypeptide: Melanocyte-stimulating hormone receptor (344 aa).

Over 1–37 (MPMQGAQRKLLGSLNSTPTATSNPGLAANHTGAPCLE) the chain is Extracellular. An N-linked (GlcNAc...) asparagine glycan is attached at N29. The helical transmembrane segment at 38-63 (VSIPDGLFLSLGLVSLVENVLVVAAI) threads the bilayer. Topologically, residues 64–72 (AKNRNLHSS) are cytoplasmic. Residues 73-93 (MYYFICCLALSDLLVSGSNML) form a helical membrane-spanning segment. At 94–118 (ETAIILLLEAGTLATRASVVQQLHN) the chain is on the extracellular side. A helical transmembrane segment spans residues 119-140 (TIDVLTCSSMLCSLCFLGAIAV). Residues 141-163 (DRYISIFYALRYHSIMTLPRAQR) are Cytoplasmic-facing. Residues 164–183 (AIAAIWVASVLSSTLFITYY) traverse the membrane as a helical segment. At 184–191 (DHAAVLLC) the chain is on the extracellular side. The chain crosses the membrane as a helical span at residues 192–211 (LVVFFLAMLVLMAVLYVHML). The Cytoplasmic portion of the chain corresponds to 212–240 (ARACQHAQGIIRLHNRQLPAHKGFGLRGA). A helical transmembrane segment spans residues 241–266 (ATLTILLGIFFLCWGPFFLHLTLVVF). At 267 to 279 (CPQHLTCNCIFKN) the chain is on the extracellular side. A helical membrane pass occupies residues 280–300 (FKVFLTLIICNTIIDPLIYAF). Topologically, residues 301-344 (RSQELRRTLKEVLLCSSWPGCWAEGGGDSVWPGSCVTLRGPLPP) are cytoplasmic. C315 is lipidated: S-palmitoyl cysteine.

The protein belongs to the G-protein coupled receptor 1 family. As to quaternary structure, interacts with MGRN1, but does not undergo MGRN1-mediated ubiquitination; this interaction competes with GNAS-binding and thus inhibits agonist-induced cAMP production. Interacts with OPN3; the interaction results in a decrease in MC1R-mediated cAMP signaling and ultimately a decrease in melanin production in melanocytes.

It is found in the cell membrane. Receptor for MSH (alpha, beta and gamma) and ACTH. The activity of this receptor is mediated by G proteins which activate adenylate cyclase. Mediates melanogenesis, the production of eumelanin (black/brown) and phaeomelanin (red/yellow), via regulation of cAMP signaling in melanocytes. This Callithrix jacchus (White-tufted-ear marmoset) protein is Melanocyte-stimulating hormone receptor (MC1R).